We begin with the raw amino-acid sequence, 255 residues long: Large ribosomal subunit protein uL6m (255 aa).

Residues 39–61 (AARRNFSATTTRPSKLGRTPLSI) form a disordered region.

The protein belongs to the universal ribosomal protein uL6 family. As to quaternary structure, component of the mitochondrial large ribosomal subunit (mt-LSU). Mature N.crassa 74S mitochondrial ribosomes consist of a small (37S) and a large (54S) subunit. The 37S small subunit contains a 16S ribosomal RNA (16S mt-rRNA) and 32 different proteins. The 54S large subunit contains a 23S rRNA (23S mt-rRNA) and 42 different proteins.

It localises to the mitochondrion. Functionally, component of the mitochondrial ribosome (mitoribosome), a dedicated translation machinery responsible for the synthesis of mitochondrial genome-encoded proteins, including at least some of the essential transmembrane subunits of the mitochondrial respiratory chain. The mitoribosomes are attached to the mitochondrial inner membrane and translation products are cotranslationally integrated into the membrane. This chain is Large ribosomal subunit protein uL6m (mrpl6), found in Neurospora crassa (strain ATCC 24698 / 74-OR23-1A / CBS 708.71 / DSM 1257 / FGSC 987).